A 152-amino-acid chain; its full sequence is Large ribosomal subunit protein bL17 (152 aa).

The disordered stretch occupies residues 121–140; the sequence is APSASQKTGKQDRAKRVKGS.

This sequence belongs to the bacterial ribosomal protein bL17 family. In terms of assembly, part of the 50S ribosomal subunit. Contacts protein L32.

This chain is Large ribosomal subunit protein bL17, found in Pelodictyon phaeoclathratiforme (strain DSM 5477 / BU-1).